Consider the following 317-residue polypeptide: Acetyl-coenzyme A carboxylase carboxyl transferase subunit alpha (317 aa).

One can recognise a CoA carboxyltransferase C-terminal domain in the interval Asn33–Asp294.

This sequence belongs to the AccA family. In terms of assembly, acetyl-CoA carboxylase is a heterohexamer composed of biotin carboxyl carrier protein (AccB), biotin carboxylase (AccC) and two subunits each of ACCase subunit alpha (AccA) and ACCase subunit beta (AccD).

The protein localises to the cytoplasm. The catalysed reaction is N(6)-carboxybiotinyl-L-lysyl-[protein] + acetyl-CoA = N(6)-biotinyl-L-lysyl-[protein] + malonyl-CoA. Its pathway is lipid metabolism; malonyl-CoA biosynthesis; malonyl-CoA from acetyl-CoA: step 1/1. In terms of biological role, component of the acetyl coenzyme A carboxylase (ACC) complex. First, biotin carboxylase catalyzes the carboxylation of biotin on its carrier protein (BCCP) and then the CO(2) group is transferred by the carboxyltransferase to acetyl-CoA to form malonyl-CoA. This is Acetyl-coenzyme A carboxylase carboxyl transferase subunit alpha from Glaesserella parasuis serovar 5 (strain SH0165) (Haemophilus parasuis).